The sequence spans 538 residues: Putative outer membrane porin BglH (538 aa).

The signal sequence occupies residues 1–25 (MFRRNIITSAILLMAPLAFSAQSLA).

It belongs to the porin LamB (TC 1.B.3) family.

It localises to the cell outer membrane. Functionally, may be a sugar porin with a broad carbohydrate specificity. This is Putative outer membrane porin BglH (bglH) from Escherichia coli O6:K15:H31 (strain 536 / UPEC).